The following is a 243-amino-acid chain: HTH-type transcriptional repressor NagR (243 aa).

The region spanning 9–77 (IPIYYQIMEQ…KGRGTFVSKP (69 aa)) is the HTH gntR-type domain. Positions 37–56 (EREYAEQFGISRMTVRQALS) form a DNA-binding region, H-T-H motif. Alpha-D-glucosamine 6-phosphate-binding positions include 89–90 (FT), 133–135 (RVR), Glu-145, 165–167 (SIY), Glu-222, and Tyr-228. Residues 89 to 90 (FT), 133 to 135 (RVR), Glu-145, 165 to 167 (SIY), Glu-222, and Tyr-228 contribute to the N-acetyl-D-glucosamine 6-phosphate site.

Homodimer. Forms dimers via the C-terminal effector-binding domain. At high concentrations, probably forms polymers along the DNA.

Binding to DNA is allosterically inhibited by an effector molecule. Binding of the effector to the C-terminal domain leads to a conformational change that modulates binding to DNA and thereby regulates transcription of the target genes. Glucosamine-6-phosphate (GlcN6P) and/or N-acetylglucosamine-6-phosphate (GlcNAc6P) are putative effectors of NagR. Binding of GlcNAc6P may prevent the protein-protein interactions responsible for polymerization along the DNA, but not the specific DNA binding. Functionally, main transcriptional repressor of genes involved in N-acetylglucosamine (GlcNAc) transport and utilization. Represses the expression of the nagAB and nagP operons by binding directly within their upstream regions. Binds to the DNA consensus sequence 5'-ATTGGTATAGACAACT-3'. Also acts as a weak repressor of mapB expression. This chain is HTH-type transcriptional repressor NagR, found in Bacillus subtilis (strain 168).